Reading from the N-terminus, the 1641-residue chain is Cortactin-binding protein 2 (1641 aa).

The segment at 1–27 (MATDGASCEPDFSRAPEDAAGAPAEAA) is disordered. Positions 119–276 (RKMQERMSTQ…EQLKRGNDSK (158 aa)) form a coiled coil. 3 disordered regions span residues 361 to 433 (SHGD…HPGL), 446 to 472 (GSNA…PTSR), and 488 to 588 (ALSR…PQGN). The span at 385–405 (GPSTGSTPDLTSSPTALPSTV) shows a compositional bias: polar residues. Arg491 bears the Asymmetric dimethylarginine mark. Pro residues predominate over residues 497–506 (AGAPPRPGAP). Positions 576–586 (TVASSPSSLPQ) are enriched in polar residues. ANK repeat units lie at residues 702–732 (GRPT…DINY), 736–765 (DGHS…QVNA), 769–798 (NGFT…NINH), 802–831 (GGQT…DRSV), 835–864 (DGWT…PAHG), and 903–933 (EGWT…EPER). The tract at residues 1442–1468 (AWRKVSTSPRKKSGRFSSPTWNKPDLS) is disordered. The residue at position 1512 (Ser1512) is a Phosphoserine. The interval 1544-1641 (LRRFDSSGNN…NSRDLEPTQK (98 aa)) is disordered. Composition is skewed to polar residues over residues 1551–1562 (GNNPVFSATVNN) and 1570–1579 (KEVSPLSSHQ). Basic and acidic residues predominate over residues 1580-1590 (MTERSNSKSKT). Low complexity predominate over residues 1612-1626 (SQNTKRSSSSSNTRQ).

As to quaternary structure, interacts with CTTN/cortactin SH3 domain. Interacts with STRN, STRN4/zinedin and MOB4/phocein; this interactions mediate the association with the STRIPAK core complex and may regulate dendritic spine distribution of the STRIPAK complex in hippocampal neurons. Activation of glutamate receptors weakens the interaction with STRN and STRN4.

The protein localises to the cytoplasm. Its subcellular location is the cell cortex. It is found in the cell projection. It localises to the dendritic spine. Its function is as follows. Regulates the dendritic spine distribution of CTTN/cortactin in hippocampal neurons, and thus controls dendritic spinogenesis and dendritic spine maintenance. Associates with the striatin-interacting phosphatase and kinase (STRIPAK) core complex to regulate dendritic spine distribution of the STRIPAK complex in hippocampal neurons. In Ovis aries (Sheep), this protein is Cortactin-binding protein 2 (CTTNBP2).